The following is a 379-amino-acid chain: tRNA-specific 2-thiouridylase MnmA (379 aa).

Residues 6 to 13 and L32 each bind ATP; that span reads AMSGGVDS. C101 acts as the Nucleophile in catalysis. The cysteines at positions 101 and 199 are disulfide-linked. G125 provides a ligand contact to ATP. Positions 148 to 150 are interaction with tRNA; sequence KDQ. C199 serves as the catalytic Cysteine persulfide intermediate.

Belongs to the MnmA/TRMU family.

Its subcellular location is the cytoplasm. It catalyses the reaction S-sulfanyl-L-cysteinyl-[protein] + uridine(34) in tRNA + AH2 + ATP = 2-thiouridine(34) in tRNA + L-cysteinyl-[protein] + A + AMP + diphosphate + H(+). In terms of biological role, catalyzes the 2-thiolation of uridine at the wobble position (U34) of tRNA, leading to the formation of s(2)U34. The sequence is that of tRNA-specific 2-thiouridylase MnmA from Paenarthrobacter aurescens (strain TC1).